Consider the following 264-residue polypeptide: Regulatory protein RecX (264 aa).

Belongs to the RecX family.

The protein localises to the cytoplasm. Its function is as follows. Modulates RecA activity. The polypeptide is Regulatory protein RecX (Limosilactobacillus reuteri (strain DSM 20016) (Lactobacillus reuteri)).